We begin with the raw amino-acid sequence, 192 residues long: Adenylate kinase (192 aa).

12–17 (GSGKTT) is an ATP binding site. Residues 34–63 (STGDLLRAEVASGSELGKTIDSFISKGNLV) form an NMP region. Residues Thr35, Arg40, 61–63 (NLV), 88–91 (GYPR), and Gln95 each bind AMP. Residues 130–136 (GRNRGTD) form an LID region. ATP is bound at residue Arg131. The AMP site is built by Arg133 and Arg145. Arg173 is an ATP binding site.

It belongs to the adenylate kinase family. As to quaternary structure, monomer.

The protein resides in the cytoplasm. It catalyses the reaction AMP + ATP = 2 ADP. The protein operates within purine metabolism; AMP biosynthesis via salvage pathway; AMP from ADP: step 1/1. Functionally, catalyzes the reversible transfer of the terminal phosphate group between ATP and AMP. Plays an important role in cellular energy homeostasis and in adenine nucleotide metabolism. The polypeptide is Adenylate kinase (Campylobacter jejuni (strain RM1221)).